The following is a 447-amino-acid chain: Argininosuccinate synthase (447 aa).

ATP contacts are provided by residues 17 to 25 (AFSGGLDTS) and alanine 43. Tyrosine 99 serves as a coordination point for L-citrulline. Residues glycine 129 and threonine 131 each coordinate ATP. 3 residues coordinate L-aspartate: threonine 131, asparagine 135, and aspartate 136. Asparagine 135 contributes to the L-citrulline binding site. Aspartate 136 is a binding site for ATP. 2 residues coordinate L-citrulline: arginine 139 and serine 192. Residue aspartate 194 participates in ATP binding. Residues threonine 201, glutamate 203, and glutamate 280 each coordinate L-citrulline.

Belongs to the argininosuccinate synthase family. Type 2 subfamily. Homotetramer.

It is found in the cytoplasm. The enzyme catalyses L-citrulline + L-aspartate + ATP = 2-(N(omega)-L-arginino)succinate + AMP + diphosphate + H(+). It functions in the pathway amino-acid biosynthesis; L-arginine biosynthesis; L-arginine from L-ornithine and carbamoyl phosphate: step 2/3. This chain is Argininosuccinate synthase (argG), found in Salmonella typhi.